A 197-amino-acid polypeptide reads, in one-letter code: Pyridoxal 5'-phosphate synthase subunit PdxT (197 aa).

Residue 53-55 (GES) coordinates L-glutamine. The Nucleophile role is filled by C85. L-glutamine contacts are provided by residues R114 and 142–143 (IR). Residues H179 and E181 each act as charge relay system in the active site.

This sequence belongs to the glutaminase PdxT/SNO family. In the presence of PdxS, forms a dodecamer of heterodimers. Only shows activity in the heterodimer.

The catalysed reaction is aldehydo-D-ribose 5-phosphate + D-glyceraldehyde 3-phosphate + L-glutamine = pyridoxal 5'-phosphate + L-glutamate + phosphate + 3 H2O + H(+). It carries out the reaction L-glutamine + H2O = L-glutamate + NH4(+). The protein operates within cofactor biosynthesis; pyridoxal 5'-phosphate biosynthesis. Functionally, catalyzes the hydrolysis of glutamine to glutamate and ammonia as part of the biosynthesis of pyridoxal 5'-phosphate. The resulting ammonia molecule is channeled to the active site of PdxS. In Pyrococcus furiosus (strain ATCC 43587 / DSM 3638 / JCM 8422 / Vc1), this protein is Pyridoxal 5'-phosphate synthase subunit PdxT.